The following is a 402-amino-acid chain: Formate-dependent phosphoribosylglycinamide formyltransferase (402 aa).

Residues 22-23 (EL) and E82 each bind N(1)-(5-phospho-beta-D-ribosyl)glycinamide. ATP-binding positions include R115, K160, 165 to 170 (SSGKGQ), 200 to 203 (EGFV), and E208. The ATP-grasp domain maps to 120 to 318 (RLAAETLGLP…EFELHARAIL (199 aa)). The Mg(2+) site is built by E277 and E289. N(1)-(5-phospho-beta-D-ribosyl)glycinamide contacts are provided by residues D296, K365, and 372 to 373 (RR).

The protein belongs to the PurK/PurT family. As to quaternary structure, homodimer.

The catalysed reaction is N(1)-(5-phospho-beta-D-ribosyl)glycinamide + formate + ATP = N(2)-formyl-N(1)-(5-phospho-beta-D-ribosyl)glycinamide + ADP + phosphate + H(+). It functions in the pathway purine metabolism; IMP biosynthesis via de novo pathway; N(2)-formyl-N(1)-(5-phospho-D-ribosyl)glycinamide from N(1)-(5-phospho-D-ribosyl)glycinamide (formate route): step 1/1. Its function is as follows. Involved in the de novo purine biosynthesis. Catalyzes the transfer of formate to 5-phospho-ribosyl-glycinamide (GAR), producing 5-phospho-ribosyl-N-formylglycinamide (FGAR). Formate is provided by PurU via hydrolysis of 10-formyl-tetrahydrofolate. The protein is Formate-dependent phosphoribosylglycinamide formyltransferase of Mycobacteroides abscessus (strain ATCC 19977 / DSM 44196 / CCUG 20993 / CIP 104536 / JCM 13569 / NCTC 13031 / TMC 1543 / L948) (Mycobacterium abscessus).